A 296-amino-acid polypeptide reads, in one-letter code: Thymidylate synthase (296 aa).

DUMP-binding positions include Arg-23 and 157–158; that span reads RR. The active-site Nucleophile is the Cys-177. DUMP-binding positions include 198-201, Asn-209, and 239-241; these read RSAD and HIY. Asp-201 is a (6R)-5,10-methylene-5,6,7,8-tetrahydrofolate binding site. Ala-295 contacts (6R)-5,10-methylene-5,6,7,8-tetrahydrofolate.

This sequence belongs to the thymidylate synthase family. Bacterial-type ThyA subfamily. Homodimer.

The protein localises to the cytoplasm. The enzyme catalyses dUMP + (6R)-5,10-methylene-5,6,7,8-tetrahydrofolate = 7,8-dihydrofolate + dTMP. The protein operates within pyrimidine metabolism; dTTP biosynthesis. In terms of biological role, catalyzes the reductive methylation of 2'-deoxyuridine-5'-monophosphate (dUMP) to 2'-deoxythymidine-5'-monophosphate (dTMP) while utilizing 5,10-methylenetetrahydrofolate (mTHF) as the methyl donor and reductant in the reaction, yielding dihydrofolate (DHF) as a by-product. This enzymatic reaction provides an intracellular de novo source of dTMP, an essential precursor for DNA biosynthesis. This Zymomonas mobilis subsp. mobilis (strain ATCC 31821 / ZM4 / CP4) protein is Thymidylate synthase.